The sequence spans 226 residues: MLTWLSRTDFDFPPLDKALQEPNGLLAAGGDLNPQRLVAAYRHGCFPWYQDGQPILWWSPDPRTVLFPDELHVSRSLAKCLRQQRFEVTFNHDFRAVIQACAAPRDYADGTWITTPMQLAYQELHLRGIAHSVEVWQERQLVGGLYGLAMGRLFFGESMFSRADNASKVGFVTLVRHLRDAGFVLIDCQMPTRHLHSLGARAISRGEFADYLQRYRDQPPTGDLDF.

Belongs to the L/F-transferase family.

Its subcellular location is the cytoplasm. The catalysed reaction is N-terminal L-lysyl-[protein] + L-leucyl-tRNA(Leu) = N-terminal L-leucyl-L-lysyl-[protein] + tRNA(Leu) + H(+). It carries out the reaction N-terminal L-arginyl-[protein] + L-leucyl-tRNA(Leu) = N-terminal L-leucyl-L-arginyl-[protein] + tRNA(Leu) + H(+). It catalyses the reaction L-phenylalanyl-tRNA(Phe) + an N-terminal L-alpha-aminoacyl-[protein] = an N-terminal L-phenylalanyl-L-alpha-aminoacyl-[protein] + tRNA(Phe). In terms of biological role, functions in the N-end rule pathway of protein degradation where it conjugates Leu, Phe and, less efficiently, Met from aminoacyl-tRNAs to the N-termini of proteins containing an N-terminal arginine or lysine. This is Leucyl/phenylalanyl-tRNA--protein transferase from Pseudomonas aeruginosa (strain UCBPP-PA14).